A 1481-amino-acid chain; its full sequence is Cystic fibrosis transmembrane conductance regulator (1481 aa).

The Cytoplasmic segment spans residues 1–77; that stretch reads MQRSPLEKAS…KLINALRRCF (77 aa). A helical transmembrane segment spans residues 78–98; that stretch reads FWRFMFYGILLYLGEVTKAVQ. Positions 81–365 constitute an ABC transmembrane type-1 1 domain; sequence FMFYGILLYL…WAVQTWYDSL (285 aa). The Extracellular segment spans residues 99–122; the sequence is PLLLGRIIASYDPDNKEERSIAIY. Residues 123–146 traverse the membrane as a helical segment; it reads LGIGLCLLFIVRTLLLHPAIFGLH. The Cytoplasmic portion of the chain corresponds to 147–195; it reads HIGMQMRIAMFSLIYKKTLKLSSRVLDKISIGQLVSLLSNNLNKFDEGL. The chain crosses the membrane as a helical span at residues 196-216; sequence ALAHFVWIVPLQVALLMGLIW. The Extracellular portion of the chain corresponds to 217 to 222; that stretch reads ELLQAS. Residues 223-243 form a helical membrane-spanning segment; it reads AFCGLGFLIVLALFQAGLGRM. Residues 244-298 are Cytoplasmic-facing; sequence MMKYRDQRAGKINERLVITSEMIENIQSVKAYCWEEAMEKMIENLRQTELKLTRK. A helical membrane pass occupies residues 299–319; that stretch reads AAYVRYFNSSAFFFSGFFVVF. Residues 320 to 339 are Extracellular-facing; it reads LSVLPYALIKGIVLRKIFTT. A helical membrane pass occupies residues 340–358; sequence ISFCIVLRMAVTRQFPWAV. The Cytoplasmic segment spans residues 359–858; the sequence is QTWYDSLGAI…YLRYITVHKS (500 aa). Residues W401, S434, 458–465, and Q493 each bind ATP; that span reads GSTGAGKT. In terms of domain architecture, ABC transporter 1 spans 423 to 646; sequence NDDDSLFFSN…RPDFSSKLMG (224 aa). C524 is lipidated: S-palmitoyl cysteine. Phosphoserine is present on residues S549 and S660. The segment at 654 to 831 is disordered R region; it reads SAERRNSILT…EEINEEDLKE (178 aa). The residue at position 670 (S670) is a Phosphoserine; by PKA. Position 686 is a phosphoserine (S686). A Glycyl lysine isopeptide (Lys-Gly) (interchain with G-Cter in ubiquitin) cross-link involves residue K688. A phosphoserine mark is found at S700 and S712. Phosphothreonine is present on T717. S737, S753, S768, S790, S795, and S813 each carry phosphoserine. A helical membrane pass occupies residues 859-879; the sequence is LIFVLIWCLVIFLAEVAASLV. The region spanning 859-1155 is the ABC transmembrane type-1 2 domain; that stretch reads LIFVLIWCLV…AVNSSIDVDS (297 aa). The Extracellular segment spans residues 880–918; that stretch reads VLWFLGNTPPQDKGNSTYSRNNSYAVIITRTSSYYVFYI. N-linked (GlcNAc...) asparagine glycans are attached at residues N894 and N900. Residues 919–939 traverse the membrane as a discontinuously helical segment; sequence YVGVADTLLAMGFFRGLPLVH. The Cytoplasmic portion of the chain corresponds to 940–990; it reads TLITVSKILHHKMLHSVLQAPMSTLNTLKAGGILNRFSKDIAILDDLLPLT. The helical transmembrane segment at 991–1011 threads the bilayer; it reads IFDFIQLLLIVIGAIAVVAVL. Over 1012 to 1013 the chain is Extracellular; the sequence is QP. The chain crosses the membrane as a helical span at residues 1014-1034; sequence YIFVATVPVIVAFIMLRAYFL. At 1035-1095 the chain is on the cytoplasmic side; sequence QTSQQLKQLE…TANWFLYLST (61 aa). A helical transmembrane segment spans residues 1096-1116; sequence LRWFQMRIEMIFVIFFIAVTF. The Extracellular portion of the chain corresponds to 1117–1130; that stretch reads ISILTTGEGEGTVG. The helical transmembrane segment at 1131-1151 threads the bilayer; it reads IILTLAMNIMSTLQWAVNSSI. Residues 1152 to 1481 are Cytoplasmic-facing; the sequence is DVDSLMRSVS…TEEEVQDTRL (330 aa). The 234-residue stretch at 1211 to 1444 folds into the ABC transporter 2 domain; the sequence is MTVKDLTAKY…RSLFQQAISP (234 aa). ATP-binding positions include Y1220 and 1245–1252; that span reads GRTGSGKS. Residues 1387–1481 are interaction with GORASP2; the sequence is RTLKQAFADC…TEEEVQDTRL (95 aa). The S-palmitoyl cysteine moiety is linked to residue C1396. 2 positions are modified to phosphoserine: S1445 and S1457. The PDZ-binding signature appears at 1479–1481; it reads TRL.

Belongs to the ABC transporter superfamily. ABCC family. CFTR transporter (TC 3.A.1.202) subfamily. Monomer; does not require oligomerization for channel activity. May form oligomers in the membrane. Interacts with SLC26A3, SLC26A6 and NHERF1. Interacts with SHANK2. Interacts with MYO6. Interacts (via C-terminus) with GOPC (via PDZ domain); this promotes CFTR internalization and thereby decreases channel activity. Interacts with SLC4A7 through NHERF1. Found in a complex with MYO5B and RAB11A. Interacts with ANO1. Interacts with SLC26A8. Interacts with AHCYL1; the interaction increases CFTR activity. Interacts with CSE1L. The core-glycosylated form interacts with GORASP2 (via PDZ GRASP-type 1 domain) in respone to ER stress. Interacts with MARCHF2; the interaction leads to CFTR ubiqtuitination and degradation. Interacts with ADGRG2. In terms of processing, N-glycosylated. Phosphorylated; cAMP treatment promotes phosphorylation and activates the channel. Dephosphorylation decreases the ATPase activity (in vitro). Phosphorylation at PKA sites activates the channel. Phosphorylation at PKC sites enhances the response to phosphorylation by PKA. Phosphorylated by AMPK; this inhibits channel activity. Post-translationally, ubiquitinated, leading to its degradation in the lysosome. Deubiquitination by USP10 in early endosomes enhances its endocytic recycling to the cell membrane. Ubiquitinated by RNF185 during ER stress. Ubiquitinated by MARCHF2.

It localises to the apical cell membrane. The protein resides in the early endosome membrane. The protein localises to the cell membrane. It is found in the recycling endosome membrane. Its subcellular location is the endoplasmic reticulum membrane. It localises to the nucleus. The catalysed reaction is ATP + H2O + closed Cl(-) channel = ADP + phosphate + open Cl(-) channel.. The enzyme catalyses chloride(in) = chloride(out). It carries out the reaction hydrogencarbonate(in) = hydrogencarbonate(out). It catalyses the reaction ATP + H2O = ADP + phosphate + H(+). Its function is as follows. Epithelial ion channel that plays an important role in the regulation of epithelial ion and water transport and fluid homeostasis. Mediates the transport of chloride ions across the cell membrane. Possesses an intrinsic ATPase activity and utilizes ATP to gate its channel; the passive flow of anions through the channel is gated by cycles of ATP binding and hydrolysis by the ATP-binding domains. The ion channel is also permeable to HCO(3)(-); selectivity depends on the extracellular chloride concentration. Exerts its function also by modulating the activity of other ion channels and transporters. Contributes to the regulation of the pH and the ion content of the epithelial fluid layer. Modulates the activity of the epithelial sodium channel (ENaC) complex, in part by regulating the cell surface expression of the ENaC complex. May regulate bicarbonate secretion and salvage in epithelial cells by regulating the transporter SLC4A7. Can inhibit the chloride channel activity of ANO1. Plays a role in the chloride and bicarbonate homeostasis during sperm epididymal maturation and capacitation. This Macaca nemestrina (Pig-tailed macaque) protein is Cystic fibrosis transmembrane conductance regulator.